We begin with the raw amino-acid sequence, 545 residues long: T-complex protein 1 subunit alpha (545 aa).

Ser2 is modified (N-acetylserine).

This sequence belongs to the TCP-1 chaperonin family. As to quaternary structure, heterooligomeric complex of about 850 to 900 kDa that forms two stacked rings, 12 to 16 nm in diameter.

It localises to the cytoplasm. Its function is as follows. Molecular chaperone; assists the folding of proteins upon ATP hydrolysis. Known to play a role, in vitro, in the folding of actin and tubulin. The chain is T-complex protein 1 subunit alpha from Arabidopsis thaliana (Mouse-ear cress).